Reading from the N-terminus, the 759-residue chain is RNA-binding protein 28 (759 aa).

A2 is modified (N-acetylalanine). An RRM 1 domain is found at 4 to 80 (LTLFVGRLPP…CKINVTVAKK (77 aa)). Residues 84–105 (NKTKEKGKNENSECPKKEPKAK) form a disordered region. Positions 85–101 (KTKEKGKNENSECPKKE) are enriched in basic and acidic residues. Residues 114–191 (ARLIIRNLSF…RTVAVDWAVA (78 aa)) enclose the RRM 2 domain. S122 carries the phosphoserine modification. The interval 201–330 (VSAIGEEKSH…NKKKRKLPSD (130 aa)) is disordered. Residues 205–224 (GEEKSHESKHQESVKKKGRE) are compositionally biased toward basic and acidic residues. Acidic residues-rich tracts occupy residues 225–256 (EEDM…EEEN) and 284–313 (SEED…EEQE). RRM domains lie at 335-419 (KTVF…LAVT) and 487-597 (TRLC…RSLQ). S397 carries the post-translational modification Phosphoserine. The disordered stretch occupies residues 594 to 759 (RSLQKMRSKP…LAKRSKWFDS (166 aa)). Over residues 615–640 (PAKDQQQKAAQHHTEEQSKVPPEQKR) the composition is skewed to basic and acidic residues. Residue K653 forms a Glycyl lysine isopeptide (Lys-Gly) (interchain with G-Cter in SUMO2) linkage. Residues 689 to 698 (VKPVHPKKPK) are compositionally biased toward basic residues. The span at 700–715 (QINQWKQEKQQLSSEQ) shows a compositional bias: polar residues.

Interacts with U1, U2, U4, U5, and U6 spliceosomal small nuclear RNAs (snRNAs). As to expression, ubiquitously expressed.

It localises to the nucleus. It is found in the nucleolus. In terms of biological role, nucleolar component of the spliceosomal ribonucleoprotein complexes. The sequence is that of RNA-binding protein 28 (RBM28) from Homo sapiens (Human).